A 186-amino-acid chain; its full sequence is Der GTPase-activating protein YihI (186 aa).

The tract at residues 1 to 65 is disordered; it reads MARTKKTRRI…AGSRHSAVDT (65 aa). Basic and acidic residues-rich tracts occupy residues 9 to 25 and 34 to 45; these read RITD…RPEN and TRYELDAKSREE.

It belongs to the YihI family. In terms of assembly, interacts with Der.

In terms of biological role, a GTPase-activating protein (GAP) that modifies Der/EngA GTPase function. May play a role in ribosome biogenesis. The protein is Der GTPase-activating protein YihI of Histophilus somni (strain 129Pt) (Haemophilus somnus).